Consider the following 320-residue polypeptide: Putative movement protein (320 aa).

Residues H144, D171, and S199 contribute to the active site. The interval 251 to 320 is disordered; it reads RRSRSISAKR…GKGNSDGSSP (70 aa). The segment covering 278 to 289 has biased composition (basic and acidic residues); that stretch reads RIERFGKDEFGR.

The protein belongs to the tobamoviruses movement protein family.

In terms of biological role, may play a role in viral cell to cell movement by increasing the size exclusion limit of plasmodesmata and forming a complex with viral RNA to assist its movement. May also have a papain-like protease activity and cleave the genome polyprotein. This is Putative movement protein from Malus sylvestris (European crab apple).